Reading from the N-terminus, the 436-residue chain is tRNA(Ile)-lysidine synthase (436 aa).

An ATP-binding site is contributed by 21–26; the sequence is SGGVDS.

Belongs to the tRNA(Ile)-lysidine synthase family.

It is found in the cytoplasm. It carries out the reaction cytidine(34) in tRNA(Ile2) + L-lysine + ATP = lysidine(34) in tRNA(Ile2) + AMP + diphosphate + H(+). Functionally, ligates lysine onto the cytidine present at position 34 of the AUA codon-specific tRNA(Ile) that contains the anticodon CAU, in an ATP-dependent manner. Cytidine is converted to lysidine, thus changing the amino acid specificity of the tRNA from methionine to isoleucine. The chain is tRNA(Ile)-lysidine synthase from Aster yellows witches'-broom phytoplasma (strain AYWB).